Consider the following 389-residue polypeptide: Inner membrane transport protein YdhP (389 aa).

At 1-6 (MKINYP) the chain is on the cytoplasmic side. Residues 7–27 (LLALAIGAFGIGTTEFSPMGL) traverse the membrane as a helical segment. Residues 28 to 43 (LPVIARGVDVSIPAAG) are Periplasmic-facing. The helical transmembrane segment at 44–64 (MLISAYAVGVMVGAPLMTLLL) threads the bilayer. The Cytoplasmic portion of the chain corresponds to 65–70 (SHRARR). Residues 71-91 (SALIFLMAIFTLGNVLSAIAP) form a helical membrane-spanning segment. Topologically, residues 92–100 (DYMTLMLSR) are periplasmic. Residues 101 to 121 (ILTSLNHGAFFGLGSVVAASV) traverse the membrane as a helical segment. At 122 to 130 (VPKHKQASA) the chain is on the cytoplasmic side. A helical membrane pass occupies residues 131 to 151 (VATMFMGLTLANIGGVPAATW). At 152 to 159 (LGETIGWR) the chain is on the periplasmic side. Residues 160–180 (MSFLATAGLGVISMVSLFFSL) traverse the membrane as a helical segment. Residues 181 to 203 (PKGGAGARPEVKKELAVLMRPQV) are Cytoplasmic-facing. Residues 204–224 (LSALLTTVLGAGAMFTLYTYI) traverse the membrane as a helical segment. Topologically, residues 225 to 236 (SPVLQSITHATP) are periplasmic. A helical membrane pass occupies residues 237–257 (VFVTAMLVLIGVGFSIGNYLG). The Cytoplasmic portion of the chain corresponds to 258 to 266 (GKLADRSVN). The chain crosses the membrane as a helical span at residues 267–287 (GTLKGFLLLLMVIMLAIPFLA). At 288–290 (RNK) the chain is on the periplasmic side. Residues 291–311 (FGAAISMAVWGAATFAVVPPL) form a helical membrane-spanning segment. Residues 312 to 330 (QMRVMRVASEAPGLSSSVN) lie on the Cytoplasmic side of the membrane. The helical transmembrane segment at 331-351 (IGAFNLGNALGAAAGGAVISA) threads the bilayer. Topologically, residues 352–356 (GLGYS) are periplasmic. A helical transmembrane segment spans residues 357–377 (FVPVMGAIVAGLALLLVFMSA). Residues 378–389 (RKQPETVCVANS) lie on the Cytoplasmic side of the membrane.

It belongs to the major facilitator superfamily.

It localises to the cell inner membrane. The polypeptide is Inner membrane transport protein YdhP (ydhP) (Escherichia coli O157:H7).